A 319-amino-acid chain; its full sequence is Thiamine-monophosphate kinase (319 aa).

Residues D28, T43, T44, and D45 each coordinate Mg(2+). H52 contacts substrate. D73 is a Mg(2+) binding site. Residues Y104, 121 to 122, and R145 each bind ATP; that span reads GD. D122 provides a ligand contact to Mg(2+). D218 contributes to the Mg(2+) binding site. ATP is bound at residue S220. Residue D221 coordinates Mg(2+). The substrate site is built by E268 and Y315.

The protein belongs to the thiamine-monophosphate kinase family.

The catalysed reaction is thiamine phosphate + ATP = thiamine diphosphate + ADP. It functions in the pathway cofactor biosynthesis; thiamine diphosphate biosynthesis; thiamine diphosphate from thiamine phosphate: step 1/1. Functionally, catalyzes the ATP-dependent phosphorylation of thiamine-monophosphate (TMP) to form thiamine-pyrophosphate (TPP), the active form of vitamin B1. The protein is Thiamine-monophosphate kinase of Methanocaldococcus jannaschii (strain ATCC 43067 / DSM 2661 / JAL-1 / JCM 10045 / NBRC 100440) (Methanococcus jannaschii).